Consider the following 109-residue polypeptide: UPF0060 membrane protein PA14_21660 (109 aa).

The next 4 helical transmembrane spans lie at 5-25 (LWFVLAAFCEIAGCYAFYLWL), 27-47 (LGKSALWVLPGLLSLTLFALL), 59-79 (AYAAYGGIYVAASLFWLAFVE), and 84-104 (LWSDWLGVALCVVGASVVLFG).

The protein belongs to the UPF0060 family.

The protein resides in the cell inner membrane. The polypeptide is UPF0060 membrane protein PA14_21660 (Pseudomonas aeruginosa (strain UCBPP-PA14)).